The chain runs to 110 residues: U1-lycotoxin-Ls1dd (110 aa).

The first 20 residues, 1 to 20 (MKFVLLFGVLLVTLFSYSSA), serve as a signal peptide directing secretion. Positions 21–44 (EMLDDFDQADEDELLSLIEKEEAR) are excised as a propeptide. Cystine bridges form between Cys47/Cys62, Cys54/Cys71, Cys61/Cys89, and Cys73/Cys87.

The protein belongs to the neurotoxin 19 (CSTX) family. 03 subfamily. Expressed by the venom gland.

It localises to the secreted. The chain is U1-lycotoxin-Ls1dd from Lycosa singoriensis (Wolf spider).